Consider the following 322-residue polypeptide: Gluconeogenesis factor (322 aa).

Belongs to the gluconeogenesis factor family.

It localises to the cytoplasm. Functionally, required for morphogenesis under gluconeogenic growth conditions. In Listeria innocua serovar 6a (strain ATCC BAA-680 / CLIP 11262), this protein is Gluconeogenesis factor.